Here is a 184-residue protein sequence, read N- to C-terminus: NADH-quinone oxidoreductase subunit B (184 aa).

The [4Fe-4S] cluster site is built by Cys37, Cys38, Cys103, and Cys132.

This sequence belongs to the complex I 20 kDa subunit family. In terms of assembly, NDH-1 is composed of 14 different subunits. Subunits NuoB, C, D, E, F, and G constitute the peripheral sector of the complex. Requires [4Fe-4S] cluster as cofactor.

It is found in the cell membrane. It carries out the reaction a quinone + NADH + 5 H(+)(in) = a quinol + NAD(+) + 4 H(+)(out). Its function is as follows. NDH-1 shuttles electrons from NADH, via FMN and iron-sulfur (Fe-S) centers, to quinones in the respiratory chain. The immediate electron acceptor for the enzyme in this species is believed to be a menaquinone. Couples the redox reaction to proton translocation (for every two electrons transferred, four hydrogen ions are translocated across the cytoplasmic membrane), and thus conserves the redox energy in a proton gradient. This chain is NADH-quinone oxidoreductase subunit B, found in Rhodococcus opacus (strain B4).